Reading from the N-terminus, the 675-residue chain is Probable potassium transport system protein Kup (675 aa).

Positions 1-12 (MEPAMPEHDGDH) are enriched in basic and acidic residues. Positions 1–25 (MEPAMPEHDGDHASNPPHGVGIPND) are disordered. 12 consecutive transmembrane segments (helical) span residues 62 to 82 (ALLA…LYAL), 104 to 124 (LASL…VILI), 153 to 173 (WLFG…SIIT), 195 to 215 (IIIP…VLGT), 222 to 242 (FGPI…KGIF), 255 to 275 (FALE…GSVV), 300 to 320 (WLFF…ALLI), 332 to 352 (LLVP…ATVI), 390 to 410 (IYLP…VLAF), 419 to 439 (AYGI…MVVF), 450 to 470 (VAIV…ANVL), and 472 to 492 (IPDG…IMTT).

The protein belongs to the HAK/KUP transporter (TC 2.A.72) family.

The protein localises to the cell inner membrane. The catalysed reaction is K(+)(in) + H(+)(in) = K(+)(out) + H(+)(out). In terms of biological role, transport of potassium into the cell. Likely operates as a K(+):H(+) symporter. The sequence is that of Probable potassium transport system protein Kup from Gluconobacter oxydans (strain 621H) (Gluconobacter suboxydans).